The sequence spans 461 residues: Transcription factor GTE3, chloroplastic (461 aa).

The span at 1 to 11 shows a compositional bias: gly residues; the sequence is MASGPIAGGGV. A disordered region spans residues 1 to 41; the sequence is MASGPIAGGGVSKTKHKWSDSGNKSQKRSKPTVANSNSLGL. A chloroplast-targeting transit peptide spans 1–51; it reads MASGPIAGGGVSKTKHKWSDSGNKSQKRSKPTVANSNSLGLEDNHQMMKIS. The region spanning 114–220 is the Bromo domain; it reads KGTVQILKSC…NLFEEKWVPL (107 aa). Positions 298-379 constitute an NET domain; sequence LVEEASANRD…EYKESLSKKK (82 aa). The segment covering 376–392 has biased composition (basic and acidic residues); that stretch reads SKKKEEQGLDSERDAES. The disordered stretch occupies residues 376 to 461; it reads SKKKEEQGLD…SSGHESDTGN (86 aa). Residues 393–412 are compositionally biased toward polar residues; the sequence is FHNSVHESNTLVTGLESSKV. The span at 429–451 shows a compositional bias: low complexity; that stretch reads GGSSSSNSSSSGSGSGSSGSDSD. Residues 452–461 show a composition bias toward basic and acidic residues; that stretch reads SSGHESDTGN.

In terms of assembly, interacts with SIZ1 (via PHD domain). Post-translationally, sumoylated by SIZ1. Sumoylation reduces capacity to bind to acetylated histone H3.

The protein localises to the plastid. It localises to the chloroplast. In terms of biological role, probable transcription factor that binds to acetylated histone H3. The sequence is that of Transcription factor GTE3, chloroplastic (GTE3) from Arabidopsis thaliana (Mouse-ear cress).